Here is a 528-residue protein sequence, read N- to C-terminus: Phosphoenolpyruvate carboxykinase (ATP) (528 aa).

Residues Arg-56, Tyr-192, and Lys-198 each coordinate substrate. ATP is bound by residues Lys-198, His-217, and 233 to 241 (GLSGTGKTT). Residues Lys-198 and His-217 each coordinate Mn(2+). Position 254 (Asp-254) interacts with Mn(2+). 3 residues coordinate ATP: Glu-282, Arg-319, and Thr-444. Arg-319 provides a ligand contact to substrate.

Belongs to the phosphoenolpyruvate carboxykinase (ATP) family. Mn(2+) serves as cofactor.

It localises to the cytoplasm. It carries out the reaction oxaloacetate + ATP = phosphoenolpyruvate + ADP + CO2. Its pathway is carbohydrate biosynthesis; gluconeogenesis. Functionally, involved in the gluconeogenesis. Catalyzes the conversion of oxaloacetate (OAA) to phosphoenolpyruvate (PEP) through direct phosphoryl transfer between the nucleoside triphosphate and OAA. This is Phosphoenolpyruvate carboxykinase (ATP) from Bacillus cereus (strain G9842).